Here is a 350-residue protein sequence, read N- to C-terminus: tRNA-splicing endonuclease (350 aa).

Active-site residues include tyrosine 286, histidine 297, and lysine 328.

The protein belongs to the tRNA-intron endonuclease family. Archaeal long subfamily. In terms of assembly, homodimer.

It catalyses the reaction pretRNA = a 3'-half-tRNA molecule with a 5'-OH end + a 5'-half-tRNA molecule with a 2',3'-cyclic phosphate end + an intron with a 2',3'-cyclic phosphate and a 5'-hydroxyl terminus.. Functionally, endonuclease that removes tRNA introns. Cleaves pre-tRNA at the 5'- and 3'-splice sites to release the intron. The products are an intron and two tRNA half-molecules bearing 2',3' cyclic phosphate and 5'-OH termini. Recognizes a pseudosymmetric substrate in which 2 bulged loops of 3 bases are separated by a stem of 4 bp. The sequence is that of tRNA-splicing endonuclease from Methanosarcina acetivorans (strain ATCC 35395 / DSM 2834 / JCM 12185 / C2A).